Here is a 215-residue protein sequence, read N- to C-terminus: Cytidylate kinase (215 aa).

Residue 10–18 (GPAASGKGT) participates in ATP binding.

It belongs to the cytidylate kinase family. Type 1 subfamily.

It is found in the cytoplasm. The catalysed reaction is CMP + ATP = CDP + ADP. It carries out the reaction dCMP + ATP = dCDP + ADP. This Bartonella bacilliformis (strain ATCC 35685 / KC583 / Herrer 020/F12,63) protein is Cytidylate kinase.